Consider the following 290-residue polypeptide: Ciliary microtubule inner protein 6 (290 aa).

The disordered stretch occupies residues 76–112 (ENQGDWWPHGKGLENPFQPPYDTKSTQRSDFKKPTCP). Mn regions lie at residues 128–160 (GIVP…ARKT) and 213–246 (SAES…IRVA). Residues 197 to 228 (SGSCSSEQSKKTEKGNSAESKMISPGLCRQNS) are disordered.

It localises to the cell projection. Its subcellular location is the cilium. The sequence is that of Ciliary microtubule inner protein 6 (CIMIP6) from Bos taurus (Bovine).